The primary structure comprises 331 residues: CRISPR-associated endonuclease Cas1 1 (331 aa).

Mn(2+)-binding residues include glutamate 161, histidine 226, and glutamate 241.

The protein belongs to the CRISPR-associated endonuclease Cas1 family. In terms of assembly, homodimer, forms a heterotetramer with a Cas2 homodimer. Requires Mg(2+) as cofactor. Mn(2+) serves as cofactor.

In terms of biological role, CRISPR (clustered regularly interspaced short palindromic repeat), is an adaptive immune system that provides protection against mobile genetic elements (viruses, transposable elements and conjugative plasmids). CRISPR clusters contain spacers, sequences complementary to antecedent mobile elements, and target invading nucleic acids. CRISPR clusters are transcribed and processed into CRISPR RNA (crRNA). Acts as a dsDNA endonuclease. Involved in the integration of spacer DNA into the CRISPR cassette. The polypeptide is CRISPR-associated endonuclease Cas1 1 (Methanospirillum hungatei JF-1 (strain ATCC 27890 / DSM 864 / NBRC 100397 / JF-1)).